Consider the following 106-residue polypeptide: Cell division topological specificity factor (106 aa).

It belongs to the MinE family.

Functionally, prevents the cell division inhibition by proteins MinC and MinD at internal division sites while permitting inhibition at polar sites. This ensures cell division at the proper site by restricting the formation of a division septum at the midpoint of the long axis of the cell. In Prochlorococcus marinus (strain SARG / CCMP1375 / SS120), this protein is Cell division topological specificity factor.